A 166-amino-acid polypeptide reads, in one-letter code: Lipoprotein signal peptidase (166 aa).

A run of 3 helical transmembrane segments spans residues 12-32, 70-90, and 102-122; these read WLWL…LILQ, WFFA…MYRA, and ALII…GFVV. Active-site residues include D123 and D141. Residues 142–162 form a helical membrane-spanning segment; that stretch reads SAICFGAAMIVLEGFLPNAAA.

It belongs to the peptidase A8 family.

The protein resides in the cell inner membrane. The enzyme catalyses Release of signal peptides from bacterial membrane prolipoproteins. Hydrolyzes -Xaa-Yaa-Zaa-|-(S,diacylglyceryl)Cys-, in which Xaa is hydrophobic (preferably Leu), and Yaa (Ala or Ser) and Zaa (Gly or Ala) have small, neutral side chains.. It functions in the pathway protein modification; lipoprotein biosynthesis (signal peptide cleavage). This protein specifically catalyzes the removal of signal peptides from prolipoproteins. The protein is Lipoprotein signal peptidase of Enterobacter sp. (strain 638).